Here is a 424-residue protein sequence, read N- to C-terminus: Cytoplasmic tRNA 2-thiolation protein 2 (424 aa).

The interval 357-385 (PAAPETEEEEELSKKAHMEKSQEKTGDAD) is disordered. A compositionally biased stretch (basic and acidic residues) spans 368-385 (LSKKAHMEKSQEKTGDAD).

This sequence belongs to the CTU2/NCS2 family.

The protein localises to the cytoplasm. The protein operates within tRNA modification; 5-methoxycarbonylmethyl-2-thiouridine-tRNA biosynthesis. In terms of biological role, plays a central role in 2-thiolation of mcm(5)S(2)U at tRNA wobble positions of tRNA(Lys), tRNA(Glu) and tRNA(Gln). May act by forming a heterodimer with NCS6 that ligates sulfur from thiocarboxylated URM1 onto the uridine of tRNAs at wobble position. Prior mcm(5) tRNA modification by the elongator complex is required for 2-thiolation. May also be involved in protein urmylation. The chain is Cytoplasmic tRNA 2-thiolation protein 2 from Yarrowia lipolytica (strain CLIB 122 / E 150) (Yeast).